The chain runs to 372 residues: Type II methyltransferase M1.HphI (372 aa).

One can recognise an SAM-dependent MTase C5-type domain in the interval Leu45–Glu372. Residue Cys122 is part of the active site.

This sequence belongs to the class I-like SAM-binding methyltransferase superfamily. C5-methyltransferase family.

It catalyses the reaction a 2'-deoxycytidine in DNA + S-adenosyl-L-methionine = a 5-methyl-2'-deoxycytidine in DNA + S-adenosyl-L-homocysteine + H(+). Its function is as follows. A methylase that recognizes the double-stranded sequence 5'-GGTGA-3' and protects the DNA from cleavage by the HphI endonuclease. Probably methylates C-2 on the bottom strand. The polypeptide is Type II methyltransferase M1.HphI (hphIAM) (Haemophilus parahaemolyticus).